The following is a 298-amino-acid chain: Probable tRNA(His) guanylyltransferase (298 aa).

The Mg(2+) site is built by Asp58, Gly59, and Asp105. Residues 58–63 and 104–105 contribute to the GTP site; these read DGRNFH and SD.

It belongs to the tRNA(His) guanylyltransferase family. As to quaternary structure, homotetramer. Interacts with MFN1 and MFN2; functions as a guanyl-nucleotide exchange factor/GEF for MFN2 and also probably MFN1. It depends on Mg(2+) as a cofactor. In terms of tissue distribution, expressed in many tissues.

Its subcellular location is the cytoplasm. It localises to the mitochondrion outer membrane. The catalysed reaction is a 5'-end ribonucleotide-tRNA(His) + GTP + ATP + H2O = a 5'-end phospho-guanosine-ribonucleotide-tRNA(His) + AMP + 2 diphosphate + H(+). Its function is as follows. Adds a GMP to the 5'-end of tRNA(His) after transcription and RNase P cleavage. This step is essential for proper recognition of the tRNA and for the fidelity of protein synthesis. Also functions as a guanyl-nucleotide exchange factor/GEF for the MFN1 and MFN2 mitofusins thereby regulating mitochondrial fusion. By regulating both mitochondrial dynamics and bioenergetic function, it contributes to cell survival following oxidative stress. The polypeptide is Probable tRNA(His) guanylyltransferase (THG1L) (Homo sapiens (Human)).